Consider the following 318-residue polypeptide: Aspartate carbamoyltransferase catalytic subunit (318 aa).

Arg-62 and Thr-63 together coordinate carbamoyl phosphate. Lys-90 is a binding site for L-aspartate. Residues Arg-112, His-140, and Gln-143 each coordinate carbamoyl phosphate. L-aspartate-binding residues include Arg-173 and Arg-227. The carbamoyl phosphate site is built by Gly-268 and Pro-269.

Belongs to the aspartate/ornithine carbamoyltransferase superfamily. ATCase family. As to quaternary structure, heterododecamer (2C3:3R2) of six catalytic PyrB chains organized as two trimers (C3), and six regulatory PyrI chains organized as three dimers (R2).

It carries out the reaction carbamoyl phosphate + L-aspartate = N-carbamoyl-L-aspartate + phosphate + H(+). Its pathway is pyrimidine metabolism; UMP biosynthesis via de novo pathway; (S)-dihydroorotate from bicarbonate: step 2/3. In terms of biological role, catalyzes the condensation of carbamoyl phosphate and aspartate to form carbamoyl aspartate and inorganic phosphate, the committed step in the de novo pyrimidine nucleotide biosynthesis pathway. The sequence is that of Aspartate carbamoyltransferase catalytic subunit from Desulfotalea psychrophila (strain LSv54 / DSM 12343).